The following is a 200-amino-acid chain: dITP/XTP pyrophosphatase (200 aa).

7 to 12 serves as a coordination point for substrate; it reads TSNKHK. 2 residues coordinate Mg(2+): Glu-38 and Asp-73. Asp-73 (proton acceptor) is an active-site residue. Residues Ser-74, 154 to 157, Lys-177, and 182 to 183 each bind substrate; these read FGYD and HR.

It belongs to the HAM1 NTPase family. In terms of assembly, homodimer. Mg(2+) serves as cofactor.

It carries out the reaction XTP + H2O = XMP + diphosphate + H(+). It catalyses the reaction dITP + H2O = dIMP + diphosphate + H(+). The catalysed reaction is ITP + H2O = IMP + diphosphate + H(+). Its function is as follows. Pyrophosphatase that catalyzes the hydrolysis of nucleoside triphosphates to their monophosphate derivatives, with a high preference for the non-canonical purine nucleotides XTP (xanthosine triphosphate), dITP (deoxyinosine triphosphate) and ITP. Seems to function as a house-cleaning enzyme that removes non-canonical purine nucleotides from the nucleotide pool, thus preventing their incorporation into DNA/RNA and avoiding chromosomal lesions. The chain is dITP/XTP pyrophosphatase from Campylobacter jejuni subsp. jejuni serotype O:2 (strain ATCC 700819 / NCTC 11168).